We begin with the raw amino-acid sequence, 206 residues long: Urease accessory protein UreG (206 aa).

GTP is bound at residue 12-19; sequence GPVGSGKT.

The protein belongs to the SIMIBI class G3E GTPase family. UreG subfamily. Homodimer. UreD, UreF and UreG form a complex that acts as a GTP-hydrolysis-dependent molecular chaperone, activating the urease apoprotein by helping to assemble the nickel containing metallocenter of UreC. The UreE protein probably delivers the nickel.

The protein localises to the cytoplasm. Its function is as follows. Facilitates the functional incorporation of the urease nickel metallocenter. This process requires GTP hydrolysis, probably effectuated by UreG. This chain is Urease accessory protein UreG, found in Synechocystis sp. (strain ATCC 27184 / PCC 6803 / Kazusa).